We begin with the raw amino-acid sequence, 61 residues long: Metallothionein-2B (61 aa).

The residue at position 1 (M1) is an N-acetylmethionine. The interval 1-29 (MDPNCSCAAGGSCTCAGSCKCKDCRCTSC) is beta. Residues C5, C7, C13, C15, C19, C21, C24, C26, C29, C33, C34, C36, C37, C41, C44, C48, C50, C57, C59, and C60 each coordinate a divalent metal cation. The alpha stretch occupies residues 30–61 (KKSCCSCCPAGCARCAQGCICKGASDKCSCCA).

Belongs to the metallothionein superfamily. Type 1 family. As to quaternary structure, monomer.

Functionally, metallothioneins have a high content of cysteine residues that bind various heavy metals; these proteins are transcriptionally regulated by both heavy metals and glucocorticoids. This is Metallothionein-2B (MT2B) from Sus scrofa (Pig).